Here is a 620-residue protein sequence, read N- to C-terminus: Carotenoid isomerooxygenase (620 aa).

Residues His211, His267, and His337 each coordinate Fe cation. Residues 440–459 (NGKQATAGEESPKRDAKRGR) form a disordered region. Residues 449 to 459 (ESPKRDAKRGR) show a composition bias toward basic and acidic residues. Fe cation is bound at residue His612.

The protein belongs to the carotenoid oxygenase family. It depends on Fe(2+) as a cofactor. In terms of tissue distribution, expression follows organogenesis of the larval Bolwig's organ (BO), which mediates larval photophobic behavior. In the adult, expression is restricted exclusively to the brain. Expressed in both neuronal cells and glia cells. Not active within photoreceptors. Active within neuronal cells within the central nervous system.

The enzyme catalyses all-trans-zeaxanthin + O2 = (3R)-11-cis-3-hydroxyretinal + (3R)-all-trans-3-hydroxyretinal. It participates in cofactor metabolism; retinol metabolism. In terms of biological role, catalyzes the oxidative cleavage at the 15,15'-double bond of carotenoids and the simultaneous all-trans to 11-cis isomerization of one cleavage product. Carotenoids like 11-cis retinal can promote visual pigment biogenesis in the dark. Essential for the biosynthesis of the 3-hydroxyretinal chromophore of rhodopsin from zeaxanthin and for proper photoreceptor development. Also essential for larval light perception. The sequence is that of Carotenoid isomerooxygenase (ninaB) from Drosophila melanogaster (Fruit fly).